Here is a 243-residue protein sequence, read N- to C-terminus: DNA repair protein RecO (243 aa).

The protein belongs to the RecO family.

Functionally, involved in DNA repair and RecF pathway recombination. The sequence is that of DNA repair protein RecO from Caulobacter sp. (strain K31).